We begin with the raw amino-acid sequence, 966 residues long: Protein mes-1 (966 aa).

The first 19 residues, 1–19, serve as a signal peptide directing secretion; that stretch reads MKIHHFLTLLCTFLPLTTT. Topologically, residues 20 to 470 are extracellular; it reads ALTNSTPLSL…QASDIPTSVE (451 aa). 6 N-linked (GlcNAc...) asparagine glycosylation sites follow: N62, N126, N183, N214, N251, and N372. A helical membrane pass occupies residues 471-491; the sequence is LMAVVLATSAIFALIALFLLY. Topologically, residues 492-966 are cytoplasmic; the sequence is RKRKRDKKAR…FKSVNVAATV (475 aa). Residues 656-966 form the Protein kinase domain; that stretch reads HNFNERIEKQ…FKSVNVAATV (311 aa). Residues 662 to 670 and K685 each bind ATP; that span reads IEKQAYWLM.

The protein belongs to the protein kinase superfamily.

The protein resides in the cell membrane. In terms of biological role, during early embryogenesis, controls asymmetric cell division and the asymmetric localization of P granules of germline precursor P2 and its descendant P3. Probably upstream of tyrosine kinase src-1, plays a role in endoderm development by controlling spindle orientation during EMS blastomere cell division. Controls EMS spindle orientation probably by promoting lin-5 and gpr-1/2 enrichment at, and let-99 exclusion from the junction between P2 and EMS cells. This chain is Protein mes-1, found in Caenorhabditis elegans.